The primary structure comprises 565 residues: Protein unc-87 (565 aa).

A compositionally biased stretch (low complexity) spans Met1–Ser27. Disordered stretches follow at residues Met1–Ser83 and Ile237–Asn262. Residues Glu54–Asn69 show a composition bias toward basic and acidic residues. Calponin-like repeat units follow at residues Ile237–Asn262, Val285–Cys310, and Val338–Thr363. Positions Lys250–Asn262 are enriched in polar residues. A compositionally biased stretch (basic and acidic residues) spans Ser369–Gln381. The interval Ser369 to Thr400 is disordered. Residues Ile384–Gly398 are compositionally biased toward polar residues. Calponin-like repeat units lie at residues Ile384–Thr409, Ile431–Val456, Val472–Thr497, and Ile517–Lys542.

The protein belongs to the calponin family. As to quaternary structure, monomer. Interacts with F-actin. Interacts with myosin. In terms of tissue distribution, expressed in the body wall muscles. Isoform a: Expression in the pharynx, anal depressor muscle, uterine muscle, vulva and unidentified neurons in the head and the ventral region. Isoform b: Expression in the body wall muscles, spermatheca, vulva and in the myoepithelial sheath.

The protein resides in the cytoplasm. It is found in the myofibril. It localises to the sarcomere. The protein localises to the i band. Its function is as follows. Thin filament-associated protein that is implicated in actin bundling and actin filament dynamics. Exhibits F-actin cross-linking activity. Required for the maintenance of sarcomeric actin organization in striated muscles. Competes with unc-60 isoform b for actin binding and protects actin filaments from depolymerization by unc-60, thereby contributing to actin filament stability. Cooperates with myosin to form actomyosin bundles and inhibits actomyosin ATPase activity and actomyosin motility. Might protect the myofilaments from mechanical stress. Functionally, acts as a negative regulator of myosin-dependent contractility of smooth muscle-like cells in the somatic gonad. The chain is Protein unc-87 (unc-87) from Caenorhabditis elegans.